A 236-amino-acid chain; its full sequence is uncharacterized protein (236 aa).

The tract at residues 1-73 is disordered; that stretch reads MEPGGSENAA…GGGWGWGNTQ (73 aa).

This is an uncharacterized protein from Homo sapiens (Human).